The following is a 51-amino-acid chain: UPF0337 protein NE0131 (51 aa).

Belongs to the UPF0337 (CsbD) family.

In Nitrosomonas europaea (strain ATCC 19718 / CIP 103999 / KCTC 2705 / NBRC 14298), this protein is UPF0337 protein NE0131.